Reading from the N-terminus, the 1065-residue chain is Valine--tRNA ligase, mitochondrial (1065 aa).

A mitochondrion-targeting transit peptide spans 1 to 15; the sequence is MPHLPLASFRPPLWG. Residues 27-52 form a disordered region; it reads ALCTQPEPHGSPVSRRNREAKQKRLR. Basic and acidic residues predominate over residues 42 to 52; it reads RNREAKQKRLR. Residues 146–156 carry the 'HIGH' region motif; sequence PNVTGSLHIGH. The 'KMSKS' region signature appears at 659 to 663; sequence KMSKS. Residue Lys-662 coordinates ATP.

Belongs to the class-I aminoacyl-tRNA synthetase family.

It localises to the mitochondrion. The catalysed reaction is tRNA(Val) + L-valine + ATP = L-valyl-tRNA(Val) + AMP + diphosphate. Its function is as follows. Catalyzes the attachment of valine to tRNA(Val) in a two-step reaction: valine is first activated by ATP to form Val-AMP and then transferred to the acceptor end of tRNA(Val). The chain is Valine--tRNA ligase, mitochondrial (Vars2) from Rattus norvegicus (Rat).